Here is a 425-residue protein sequence, read N- to C-terminus: Serine hydroxymethyltransferase (425 aa).

(6S)-5,6,7,8-tetrahydrofolate contacts are provided by residues L124 and 128 to 130 (GHL). At K233 the chain carries N6-(pyridoxal phosphate)lysine.

It belongs to the SHMT family. As to quaternary structure, homodimer. Requires pyridoxal 5'-phosphate as cofactor.

It localises to the cytoplasm. It carries out the reaction (6R)-5,10-methylene-5,6,7,8-tetrahydrofolate + glycine + H2O = (6S)-5,6,7,8-tetrahydrofolate + L-serine. It functions in the pathway one-carbon metabolism; tetrahydrofolate interconversion. It participates in amino-acid biosynthesis; glycine biosynthesis; glycine from L-serine: step 1/1. Functionally, catalyzes the reversible interconversion of serine and glycine with tetrahydrofolate (THF) serving as the one-carbon carrier. This reaction serves as the major source of one-carbon groups required for the biosynthesis of purines, thymidylate, methionine, and other important biomolecules. Also exhibits THF-independent aldolase activity toward beta-hydroxyamino acids, producing glycine and aldehydes, via a retro-aldol mechanism. This Clavibacter sepedonicus (Clavibacter michiganensis subsp. sepedonicus) protein is Serine hydroxymethyltransferase.